A 244-amino-acid chain; its full sequence is Uridylate kinase (244 aa).

Residue 18 to 21 (KISG) participates in ATP binding. Positions 26-31 (GDQGYG) are involved in allosteric activation by GTP. Gly-60 lines the UMP pocket. The ATP site is built by Gly-61 and Arg-65. Residues Asp-80 and 141–148 (TGNPYFTT) each bind UMP. Residues Thr-168, Tyr-174, and Asp-177 each contribute to the ATP site.

Belongs to the UMP kinase family. In terms of assembly, homohexamer.

The protein resides in the cytoplasm. The enzyme catalyses UMP + ATP = UDP + ADP. Its pathway is pyrimidine metabolism; CTP biosynthesis via de novo pathway; UDP from UMP (UMPK route): step 1/1. Allosterically activated by GTP. Inhibited by UTP. Functionally, catalyzes the reversible phosphorylation of UMP to UDP. In Paracoccus denitrificans (strain Pd 1222), this protein is Uridylate kinase.